The following is a 532-amino-acid chain: MGMKKDLLLVLTIESVVLGVVLGFVIRPFNPSNDTISLIGFPGEIFMQIVEMMILPLIMSSVISALAQVRARDARRIGIVTIIYYMITTFLATFTGIILVSSIHPGDPELIHELGEGTLENTALSTLDTFLDQIRNMFPENIIQATFQQVQTEYMPIKPSRVRNATSMNMTSEVLHKQTLTYTNEMNVLGLIVFCSGFGIILSILGDQARLMINFFIVLDAIIMRWISALMWCYPIGILSLVCKNIIDIDNLTETAQALAMYVVTVICGLMIHSLLTLPLLYFLVTKKSPFAFMTGMLQALATAFGTASSGATLPVTFRALEENLKIDRRVTRFVLPLGATITMDGTALYEAVAVIFIAQLHNIKLSLMDLVTISITTTVASIGSGSVPAGLDTIVIVLTTVGLPAKDLSLLLTVDWLLDRIRTSVNVLGDSFGAGIIHHLTRSSLLEADTDELIRQIREDIDILNNPHQDTLPISHHSVQSTIQNTQNAMQAPHVYSKSARASFAPIPNEEERKALLKESIALNKSDTHIV.

The Cytoplasmic segment spans residues 1-5; that stretch reads MGMKK. 3 consecutive transmembrane segments (helical) span residues 6–26, 46–66, and 83–103; these read DLLL…GFVI, FMQI…ISAL, and IYYM…VSSI. Topologically, residues 104 to 181 are extracellular; sequence HPGDPELIHE…SEVLHKQTLT (78 aa). N-linked (GlcNAc...) asparagine glycosylation is found at asparagine 164 and asparagine 169. 5 helical membrane passes run 182–202, 222–242, 264–284, 352–372, and 383–402; these read YTNE…GIIL, IIMR…LSLV, VTVI…LYFL, AVAV…MDLV, and IGSG…LTTV.

The protein belongs to the dicarboxylate/amino acid:cation symporter (DAACS) (TC 2.A.23) family.

The protein resides in the membrane. In Caenorhabditis elegans, this protein is Putative sodium-dependent excitatory amino acid transporter glt-3 (glt-3).